The sequence spans 479 residues: Protein kinase 2 (479 aa).

Residues 1–136 are disordered; sequence MGKGQSKIKN…NGNDDEDEGP (136 aa). Composition is skewed to low complexity over residues 52 to 65 and 79 to 96; these read AQQQQQQQQTTTAA and IPAPATQTPITQTGTPTI. Polar residues predominate over residues 102 to 115; that stretch reads NTDNNNINGASNEA. The Protein kinase domain occupies 153 to 407; sequence FELLNVIGKG…GGEVKQHPWF (255 aa). ATP is bound by residues 159–167 and lysine 182; that span reads IGKGSFGKV. The active-site Proton acceptor is the aspartate 276. A Phosphothreonine; by autocatalysis modification is found at threonine 309. The AGC-kinase C-terminal domain occupies 408-479; sequence KNIDWEKLDR…TYVADSILKD (72 aa). The residue at position 470 (threonine 470) is a Phosphothreonine.

This sequence belongs to the protein kinase superfamily. AGC Ser/Thr protein kinase family. S6 kinase subfamily. Seems to be myristoylated.

It localises to the cytoplasm. It is found in the cell membrane. The catalysed reaction is L-seryl-[protein] + ATP = O-phospho-L-seryl-[protein] + ADP + H(+). The enzyme catalyses L-threonyl-[protein] + ATP = O-phospho-L-threonyl-[protein] + ADP + H(+). In terms of biological role, required for morphogenesis during multicellular development. Phosphorylates talB, gefN, gefS, PI4P 5-kinase and gacQ. In Dictyostelium discoideum (Social amoeba), this protein is Protein kinase 2 (pkgB).